A 445-amino-acid chain; its full sequence is Histidinol dehydrogenase (445 aa).

The NAD(+) site is built by tyrosine 130, glutamine 192, and asparagine 215. Serine 238, glutamine 260, and histidine 263 together coordinate substrate. 2 residues coordinate Zn(2+): glutamine 260 and histidine 263. Active-site proton acceptor residues include glutamate 328 and histidine 329. Residues histidine 329, aspartate 362, glutamate 416, and histidine 421 each contribute to the substrate site. Residue aspartate 362 participates in Zn(2+) binding. Histidine 421 contributes to the Zn(2+) binding site.

This sequence belongs to the histidinol dehydrogenase family. It depends on Zn(2+) as a cofactor.

The enzyme catalyses L-histidinol + 2 NAD(+) + H2O = L-histidine + 2 NADH + 3 H(+). Its pathway is amino-acid biosynthesis; L-histidine biosynthesis; L-histidine from 5-phospho-alpha-D-ribose 1-diphosphate: step 9/9. Functionally, catalyzes the sequential NAD-dependent oxidations of L-histidinol to L-histidinaldehyde and then to L-histidine. In Gloeobacter violaceus (strain ATCC 29082 / PCC 7421), this protein is Histidinol dehydrogenase.